The sequence spans 380 residues: 1-deoxy-D-xylulose 5-phosphate reductoisomerase (380 aa).

Residues Thr10, Gly11, Ser12, Ile13, Gly36, Arg37, Asn38, and Asn120 each coordinate NADPH. Lys121 provides a ligand contact to 1-deoxy-D-xylulose 5-phosphate. Residue Glu122 coordinates NADPH. Asp146 contributes to the Mn(2+) binding site. 4 residues coordinate 1-deoxy-D-xylulose 5-phosphate: Ser147, Glu148, Ser172, and His195. Glu148 lines the Mn(2+) pocket. Gly201 contributes to the NADPH binding site. Ser208, Asn213, Lys214, and Glu217 together coordinate 1-deoxy-D-xylulose 5-phosphate. Glu217 is a Mn(2+) binding site.

This sequence belongs to the DXR family. Mg(2+) serves as cofactor. The cofactor is Mn(2+).

It carries out the reaction 2-C-methyl-D-erythritol 4-phosphate + NADP(+) = 1-deoxy-D-xylulose 5-phosphate + NADPH + H(+). Its pathway is isoprenoid biosynthesis; isopentenyl diphosphate biosynthesis via DXP pathway; isopentenyl diphosphate from 1-deoxy-D-xylulose 5-phosphate: step 1/6. Its function is as follows. Catalyzes the NADPH-dependent rearrangement and reduction of 1-deoxy-D-xylulose-5-phosphate (DXP) to 2-C-methyl-D-erythritol 4-phosphate (MEP). The sequence is that of 1-deoxy-D-xylulose 5-phosphate reductoisomerase from Listeria monocytogenes serovar 1/2a (strain ATCC BAA-679 / EGD-e).